Consider the following 315-residue polypeptide: MNEIRTQVQFIDIDEDMAGQRIDNFLRNQLKNIPKSVVYRILRKGEVRVNKKRVKAEYKLEAGDVVRVPPVTVEVKENEPAPPSTKLSKVAELEHCIVYEDDHLLILNKPSGTAVHGGSGLHFGAIEALRALRPQARFLELVHRIDRDTSGILLVAKKRSALRHLQAQFREKTVQKYYYALVMGHWDAECKVVNAPLLKNEVNSIVRVNPNGKPSETRFRILEKFAEATLVQASPVTGRTHQIRVHTQYMGHPIAWDDRYGDRRFDAYTAQFGIERLFLHAANIQFVHPASEKKLEIHAPLEAHLEQALTKMRQA.

One can recognise an S4 RNA-binding domain in the interval 20–94 (QRIDNFLRNQ…TKLSKVAELE (75 aa)). Asp-146 is an active-site residue.

The protein belongs to the pseudouridine synthase RluA family.

It carries out the reaction uridine(955/2504/2580) in 23S rRNA = pseudouridine(955/2504/2580) in 23S rRNA. In terms of biological role, responsible for synthesis of pseudouridine from uracil at positions 955, 2504 and 2580 in 23S ribosomal RNA. The chain is Ribosomal large subunit pseudouridine synthase C (rluC) from Vibrio cholerae serotype O1 (strain ATCC 39315 / El Tor Inaba N16961).